The chain runs to 108 residues: ADM5 (108 aa).

A signal peptide spans M1–D18. The propeptide occupies P19–L25. C38 and C43 are oxidised to a cystine. Residues K61 to G108 form a disordered region. At Y77 the chain carries Tyrosine amide. Over residues G78–E89 the composition is skewed to basic residues. Positions E89–G108 are excised as a propeptide. The segment covering A90–L101 has biased composition (basic and acidic residues).

It belongs to the adrenomedullin family. Expressed abundantly in the spleen and thymus. Also expressed in adrenal and pituitary. Not expressed in brain, heart, kidney, liver and stomach.

It is found in the secreted. Seems to have a peripheral vasodepressor effect and a central vasopressor effect. The polypeptide is ADM5 (ADM5) (Sus scrofa (Pig)).